Here is a 55-residue protein sequence, read N- to C-terminus: Neurotoxin X-29S (55 aa).

A signal peptide spans 1 to 23 (MKIFFAVLVILVLFSMLIWTAYG). 3 disulfides stabilise this stretch: Cys-30–Cys-45, Cys-36–Cys-50, and Cys-39–Cys-53.

As to expression, expressed by the venom gland.

The protein localises to the secreted. The chain is Neurotoxin X-29S from Olivierus martensii (Manchurian scorpion).